The chain runs to 540 residues: MATSGAASAELVIGWCIFGLLLLAILAFCWIYVRKYQSRRESEVVSTITAIFSLAIALITSALLPVDIFLVSYMKNQNGTFKDWANANVSRQIEDTVLYGYYTLYSVILFCVFFWIPFVYFYYEEKDDDDTSKCTQIKTALKYTLGFVVICALLLLVGAFVPLNVPNNKNSTEWEKVKSLFEELGSSHGLAALSFSISSLTLIGMLAAITYTAYGMSALPLNLIKGTRSAAYERLENTEDIEEVEQHIQTIKSKSKDGRPLPARDKRALKQFEERLRTLKKRERHLEFIENSWWTKFCGALRPLKIVWGIFFILVALLFVISLFLSNLDKALHSAGIDSGFIIFGANLSNPLNMLLPLLQTVFPLDYILITIIIMYFIFTSMAGIRNIGIWFFWIRLYKIRRGRTRPQALLFLCMILLLIVLHTSYMIYSLAPQYVMYGSQNYLIETNITSDNHKGNSTLSVPKRCDADAPEDQCTVTRTYLFLHKFWFFSAAYYFGNWAFLGVFLIGLIVSCCKGKKSVIEGVDEDSDISDDEPSVYSA.

Topologically, residues 1-10 are extracellular; it reads MATSGAASAE. A helical transmembrane segment spans residues 11–31; it reads LVIGWCIFGLLLLAILAFCWI. The Cytoplasmic portion of the chain corresponds to 32–50; it reads YVRKYQSRRESEVVSTITA. Residues 51-71 traverse the membrane as a helical segment; it reads IFSLAIALITSALLPVDIFLV. Topologically, residues 72–100 are extracellular; the sequence is SYMKNQNGTFKDWANANVSRQIEDTVLYG. N-linked (GlcNAc...) asparagine glycans are attached at residues N78 and N88. The chain crosses the membrane as a helical span at residues 101–121; sequence YYTLYSVILFCVFFWIPFVYF. Residues 122-144 are Cytoplasmic-facing; the sequence is YYEEKDDDDTSKCTQIKTALKYT. The chain crosses the membrane as a helical span at residues 145–165; it reads LGFVVICALLLLVGAFVPLNV. Residues 166–188 lie on the Extracellular side of the membrane; it reads PNNKNSTEWEKVKSLFEELGSSH. N170 carries N-linked (GlcNAc...) asparagine glycosylation. The chain crosses the membrane as a helical span at residues 189 to 209; it reads GLAALSFSISSLTLIGMLAAI. Residues 210–305 lie on the Cytoplasmic side of the membrane; sequence TYTAYGMSAL…KFCGALRPLK (96 aa). Residues 232 to 235 carry the YERL motif; mediates interaction with adapter protein complex 2 and is essential for its function in clathrin-mediated endocytosis of INSR motif; it reads YERL. T238 is modified (phosphothreonine). The short motif at 294–297 is the WTKF motif; mediates interaction with adapter protein complex 2 and is essential for its function in clathrin-mediated endocytosis of INSR element; that stretch reads WTKF. Residues 306-326 traverse the membrane as a helical segment; it reads IVWGIFFILVALLFVISLFLS. Over 327-364 the chain is Extracellular; it reads NLDKALHSAGIDSGFIIFGANLSNPLNMLLPLLQTVFP. A glycan (N-linked (GlcNAc...) asparagine) is linked at N347. Residues 365 to 385 traverse the membrane as a helical segment; the sequence is LDYILITIIIMYFIFTSMAGI. The Cytoplasmic portion of the chain corresponds to 386-408; it reads RNIGIWFFWIRLYKIRRGRTRPQ. The chain crosses the membrane as a helical span at residues 409-429; that stretch reads ALLFLCMILLLIVLHTSYMIY. Over 430 to 486 the chain is Extracellular; the sequence is SLAPQYVMYGSQNYLIETNITSDNHKGNSTLSVPKRCDADAPEDQCTVTRTYLFLHK. N448 and N457 each carry an N-linked (GlcNAc...) asparagine glycan. Residues 487 to 507 form a helical membrane-spanning segment; sequence FWFFSAAYYFGNWAFLGVFLI. The Cytoplasmic portion of the chain corresponds to 508–540; it reads GLIVSCCKGKKSVIEGVDEDSDISDDEPSVYSA. Phosphoserine is present on residues S528 and S531.

Belongs to the LIMR family. LMBRD1 subfamily. (Microbial infection) Interacts with hepatitis delta virus NES (HDAg-L). In terms of assembly, interacts with ABCD4; this interaction induces the translocation of ABCD4 from the endoplasmic reticulum to the lysosome. Interacts with ABCD4 and MMACHC; this interaction ensures the transport of cobalamin from the lysosome to the cytoplasm. Interacts with INSR, adapter protein complex 2 and clathrin heavy chain. N-glycosylated. In terms of tissue distribution, isoform 3 is expressed in liver.

The protein localises to the endoplasmic reticulum membrane. It is found in the lysosome membrane. Its subcellular location is the cell membrane. It localises to the cytoplasmic vesicle. The protein resides in the clathrin-coated vesicle. Lysosomal membrane chaperone required to export cobalamin (vitamin B12) from the lysosome to the cytosol, allowing its conversion to cofactors. Targets ABCD4 transporter from the endoplasmic reticulum to the lysosome. Then forms a complex with lysosomal ABCD4 and cytoplasmic MMACHC to transport cobalamin across the lysosomal membrane. Acts as an adapter protein which plays an important role in mediating and regulating the internalization of the insulin receptor (INSR). Involved in clathrin-mediated endocytosis of INSR via its interaction with adapter protein complex 2. Essential for the initiation of gastrulation and early formation of mesoderm structures during embryogenesis. Its function is as follows. (Microbial infection) May play a role in the assembly of hepatitis delta virus (HDV). The sequence is that of Lysosomal cobalamin transport escort protein LMBD1 from Homo sapiens (Human).